We begin with the raw amino-acid sequence, 314 residues long: Methionyl-tRNA formyltransferase (314 aa).

A (6S)-5,6,7,8-tetrahydrofolate-binding site is contributed by 109–112 (SLLP).

This sequence belongs to the Fmt family.

The catalysed reaction is L-methionyl-tRNA(fMet) + (6R)-10-formyltetrahydrofolate = N-formyl-L-methionyl-tRNA(fMet) + (6S)-5,6,7,8-tetrahydrofolate + H(+). Its function is as follows. Attaches a formyl group to the free amino group of methionyl-tRNA(fMet). The formyl group appears to play a dual role in the initiator identity of N-formylmethionyl-tRNA by promoting its recognition by IF2 and preventing the misappropriation of this tRNA by the elongation apparatus. The chain is Methionyl-tRNA formyltransferase from Syntrophomonas wolfei subsp. wolfei (strain DSM 2245B / Goettingen).